The sequence spans 325 residues: GTPase Era (325 aa).

The 169-residue stretch at 30–198 (HCGFVAIVGR…KKHVRDHLPK (169 aa)) folds into the Era-type G domain. Residues 38 to 45 (GRPNVGKS) are G1. GTP is bound at residue 38 to 45 (GRPNVGKS). A G2 region spans residues 64-68 (QTTRH). A G3 region spans residues 85–88 (DTPG). GTP contacts are provided by residues 85-89 (DTPGL) and 147-150 (NKVD). Residues 147–150 (NKVD) are G4. Positions 177–179 (ISA) are G5. Residues 221-307 (VREKLMRFTG…YLETWVKVKS (87 aa)) form the KH type-2 domain.

Belongs to the TRAFAC class TrmE-Era-EngA-EngB-Septin-like GTPase superfamily. Era GTPase family. Monomer.

The protein resides in the cytoplasm. The protein localises to the cell inner membrane. Functionally, an essential GTPase that binds both GDP and GTP, with rapid nucleotide exchange. Plays a role in 16S rRNA processing and 30S ribosomal subunit biogenesis and possibly also in cell cycle regulation and energy metabolism. The chain is GTPase Era from Vibrio cholerae serotype O1 (strain ATCC 39315 / El Tor Inaba N16961).